Reading from the N-terminus, the 432-residue chain is MAVSEIKATMKLKPLKAPVFHKRDKDLRGSFSDHLKHKESKLSPAQLEAFRNAYNFFTKDRTGCIDSHGLISTIAKLGMNLNTYDIYNELKCADLDRDGKINFSDFINVLTDKKLFLKAVVPEKKICLDLANNPGILLFEILSKFVETSSLHRKDIIELVSYFRKRFQESHSEIMWSSYGRRGLKSEICSPPRSSTAAFANSARISIMKERDLYKFLEALKRCNLRTDSPYSKIPVFPLFPDVDGTVMGKPFKDTQKIEMLRRKEPLTFFEDYFFNKRDWKTQAMNVKPLKSASGYSDDILAIDHLFKKKQHWTVTDAAAIKQHVKKATESYNLGIALDHRKEMLNLWKKIRGDLVGIESNNESFYNTFSTYTWSWNVCQELLSAKDLRLHDASMNKSSPSNSGLSSPSDFSESDPETGRKRKRKSSRGFRQ.

EF-hand domains follow at residues 45-80 (AQLE…LGMN) and 81-116 (LNTY…KKLF). 5 residues coordinate Ca(2+): D94, D96, D98, K100, and D105. A Phosphotyrosine modification is found at Y273. The tract at residues 394–432 (SMNKSSPSNSGLSSPSDFSESDPETGRKRKRKSSRGFRQ) is disordered. Over residues 395–411 (MNKSSPSNSGLSSPSDF) the composition is skewed to low complexity. Positions 420 to 432 (RKRKRKSSRGFRQ) are enriched in basic residues.

The protein is EF-hand calcium-binding domain-containing protein 3 (Efcab3) of Mus musculus (Mouse).